Reading from the N-terminus, the 878-residue chain is MAAAEQSAEQFRGQARLPGFAAPRRYDLRLVPDLDGCAFTGSVDVSVDVTAPTRFLVLNAAELEVSPGGVQFKPHGAEQELHPAEVTNVPEDEILIIRFNEVLPVGEGTLVIAFKGTLNDKMHGFYRSVYELNGEKKNMAVTQFEPADARRCFPCWDEPSFKAIFKITLEVPSETVALSNMPVVEEKVNGLIKAVYFQETPIMSTYLVAVIVGMFDYVEAFTTDGTRVRVYTQVGKSAQGKFALEVAVKTLVLFKEYFAVPYPLPKMDMIAIPDFASGAMENYGLVTYRETALLFDEKHSAAANKQRVAVVVAHELAHQWFGNLVTMEWWTHLWLNEGFATWVSYLAADNFFPEWNVWTQFLEESTTGFKLDALAGSHPIEVDVNHVDEIDEIFDAISYRKGAAVIRMLQSYLGAETFQKSLAAYIEKFAYSNAKTEDLWAALEEGSGEPVKTLMHSWTKQQGYPVVNVKLKDGKLEMEQTQFLSSGAEGVGQWVVPITLCCCSYSRQEKFLFNGKQEDFNLSGLVECQKKEDFWIKLNVNQTGFYRVSYDEELASRLRYAIEANKLSAADRYGVLDDTYALCMAGKQKLVSLLHLIAAYKDETEYTVLARVIDTSLSIVEMVAVAAPEGLGKLKKFLIDFLEPFAQRIGWDAKSGEGHLDALLRGTLLTALAELGHEATINEAVRRFNIFVEDRETPLLPPDVRKAAYVALMQTVNKSNRAGYESLLKIYKETDLSQEKVRILGSLASCPDPDVVRDTLDFMLSPEVRNQDSIFLLRGVGAAGHEVAWTWLKEKWDYISDTFSGTLLTYFVSTTVSPLRTDEMGDDAEEFFKSRTKANIARTVKQSIERVRINAKWVESTRAEANLGNVLKEISHDH.

The segment at 105-212 is required for membrane association; that stretch reads VGEGTLVIAF…MSTYLVAVIV (108 aa). Substrate is bound by residues Glu-145 and 278 to 282; that span reads GAMEN. Position 314 (His-314) interacts with Zn(2+). The Proton acceptor role is filled by Glu-315. 2 residues coordinate Zn(2+): His-318 and Glu-337. Residues 727 to 728 carry the Dileucine internalization motif motif; sequence LL.

The protein belongs to the peptidase M1 family. In terms of assembly, homodimer. Requires Zn(2+) as cofactor.

Its subcellular location is the membrane. The protein localises to the microsome membrane. It localises to the cytoplasm. It catalyses the reaction Release of an N-terminal amino acid, Xaa-|-Yaa- from a peptide, amide or arylamide. Xaa is preferably Ala, but may be most amino acids including Pro (slow action). When a terminal hydrophobic residue is followed by a prolyl residue, the two may be released as an intact Xaa-Pro dipeptide.. This Oryza sativa subsp. japonica (Rice) protein is Aminopeptidase M1-A.